We begin with the raw amino-acid sequence, 493 residues long: Alpha-amylase-related protein (493 aa).

An N-terminal signal peptide occupies residues 1–19 (MFKFALALTLCLAGSLSLA). Position 20 is a pyrrolidone carboxylic acid (Q20). A disulfide bridge connects residues C47 and C103. 3 residues coordinate Ca(2+): N117, Q168, and D177. C156 and C170 are oxidised to a cystine. Position 205 (R205) interacts with chloride. The active-site Nucleophile is the D207. A Ca(2+)-binding site is contributed by H211. The active-site Proton donor is E244. Residues N307 and R342 each contribute to the chloride site. 3 cysteine pairs are disulfide-bonded: C375-C381, C417-C440, and C447-C459.

This sequence belongs to the glycosyl hydrolase 13 family. As to quaternary structure, monomer. Ca(2+) is required as a cofactor. The cofactor is chloride.

The protein localises to the secreted. It catalyses the reaction Endohydrolysis of (1-&gt;4)-alpha-D-glucosidic linkages in polysaccharides containing three or more (1-&gt;4)-alpha-linked D-glucose units.. The sequence is that of Alpha-amylase-related protein (Amyrel) from Drosophila elegans (Fruit fly).